Reading from the N-terminus, the 66-residue chain is Large ribosomal subunit protein uL29 (66 aa).

The protein belongs to the universal ribosomal protein uL29 family.

In Deinococcus deserti (strain DSM 17065 / CIP 109153 / LMG 22923 / VCD115), this protein is Large ribosomal subunit protein uL29.